Reading from the N-terminus, the 1028-residue chain is Contactin-3 (1028 aa).

The first 19 residues, 1-19 (MMLSWKQLILLSFIGCLAG), serve as a signal peptide directing secretion. Ig-like C2-type domains are found at residues 32-117 (PSNS…AKLQ), 122-209 (ENFK…RVLG), 227-313 (PKIE…GRLT), 318-402 (PYWL…AELK), 408-497 (PDFS…LVVT), and 499-593 (PTRI…AELI). 5 disulfides stabilise this stretch: Cys-50-Cys-100, Cys-144-Cys-196, Cys-249-Cys-297, Cys-339-Cys-386, and Cys-431-Cys-479. Residues Asn-65 and Asn-193 are each glycosylated (N-linked (GlcNAc...) asparagine). 3 N-linked (GlcNAc...) asparagine glycosylation sites follow: Asn-377, Asn-468, and Asn-489. Residues Cys-521 and Cys-577 are joined by a disulfide bond. Fibronectin type-III domains lie at 600 to 698 (PPEN…TEEA), 703 to 800 (APSE…SAEE), 805 to 901 (APSH…TKKT), and 902 to 998 (PPSQ…TSMD). A disordered region spans residues 684 to 714 (GEPSLPSEKVRTEEAAPEIAPSEVSGGGGSR). Asn-765, Asn-860, Asn-895, Asn-913, Asn-931, and Asn-956 each carry an N-linked (GlcNAc...) asparagine glycan. Ser-1002 is lipidated: GPI-anchor amidated serine. A propeptide spans 1003–1028 (TSAISNIHPLSGYMSVLLFFIVNALW) (removed in mature form).

It belongs to the immunoglobulin superfamily. Contactin family. In terms of assembly, interacts with PTPRG. Specifically expressed in brain. Ectopically expressed in tumors expressing endogenous intracisternal A-type particles (IAPs).

The protein resides in the cell membrane. Contactins mediate cell surface interactions during nervous system development. Has some neurite outgrowth-promoting activity. This is Contactin-3 (Cntn3) from Mus musculus (Mouse).